The following is a 624-amino-acid chain: MEIIRSNFKINLHKVYQAIEEADFFAIDGEFSGISDGPSVTALTSGFDTPEERYQKLKKHSMDFLLFQFGLCAFKYDHTDSKHVTKSFNFYVFPKPFSRSSPDVKFVCQSSSIDFLASQGFDFNKVFCSGIPYLNQEEERQLREQFDEKRSQANGAGALAKCPVTIPEDQKKFIDQVIEKIEDFLQSEEKRSLELDPCTGFQRKLIYQTLSWKYPKGIHVETLETDKKERHIVISKVDEEERKRREQEKYTKEQEELNDAVGFSRVIHAIANSGKLVVGHNMLLDVMHTIHQFYCPLPADLNEFKEMAICVFPRLLDTKLMASTQPFKDIINNTSLAELEKRLKETPFDPPKVESAEGFPSYDTASEQLHEAGYDAYITGLCFISMANYLGSLLSPPKMCVSARSKLIEPFFNKLFLMRVMDIPYLNLEGPDLQPKRDHVLHVTFPKEWKTSDLYQLFSAFGNIQISWIDDTSAFVSLSQPEQVQIAVNTSKYAESYRIQTYAEYVGKKQEGKQVKRKWTEDSWKEVDRKRPHMQGPCYHSNSFTAAGVLGKRTLSPDPREAALEDRESEEVSDSELEQTDSCTDPLPEGRKKSKKLKRMKKELSLAGSVSDSPAVLFEVPDTW.

Residues Asp28 and Glu30 each contribute to the a divalent metal cation site. The region spanning Lys171–Asp238 is the R3H domain. At Lys213 the chain carries N6-acetyllysine. The a divalent metal cation site is built by Asp285 and Asp375. Residue Lys492 is modified to N6-acetyllysine. Ser523 bears the Phosphoserine mark. Ser543 is subject to Phosphoserine; by MAPKAPK2. Residues Gly551 to Asp612 are disordered. Residues Arg567–Gln579 show a composition bias toward acidic residues. Phosphoserine is present on residues Ser569, Ser573, and Ser575. The segment covering Lys592–Lys601 has biased composition (basic residues). A phosphoserine mark is found at Ser605, Ser609, and Ser613.

It belongs to the CAF1 family. Homodimer. Found in a mRNA decay complex with RENT1, RENT2 and RENT3B. Interacts with KHSRP. Interacts with CELF1/CUGBP1. Interacts with ZC3HAV1 in an RNA-independent manner. Interacts with DHX36. It depends on Mg(2+) as a cofactor. Phosphorylation by MAPKAPK2, preventing GADD45A mRNA degradation after genotoxic stress.

The protein localises to the nucleus. It is found in the cytoplasm. The protein resides in the nucleolus. It catalyses the reaction Exonucleolytic cleavage of poly(A) to 5'-AMP.. In terms of biological role, 3'-exoribonuclease that has a preference for poly(A) tails of mRNAs, thereby efficiently degrading poly(A) tails. Exonucleolytic degradation of the poly(A) tail is often the first step in the decay of eukaryotic mRNAs and is also used to silence certain maternal mRNAs translationally during oocyte maturation and early embryonic development. Interacts with both the 3'-end poly(A) tail and the 5'-end cap structure during degradation, the interaction with the cap structure being required for an efficient degradation of poly(A) tails. Involved in nonsense-mediated mRNA decay, a critical process of selective degradation of mRNAs that contain premature stop codons. Also involved in degradation of inherently unstable mRNAs that contain AU-rich elements (AREs) in their 3'-UTR, possibly via its interaction with KHSRP. Probably mediates the removal of poly(A) tails of AREs mRNAs, which constitutes the first step of destabilization. Also able to recognize poly(A) tails of microRNAs such as MIR21 and H/ACA box snoRNAs (small nucleolar RNAs) leading to leading to microRNAs degradation or snoRNA increased stability. In Mus musculus (Mouse), this protein is Poly(A)-specific ribonuclease PARN (Parn).